An 89-amino-acid polypeptide reads, in one-letter code: MTLLASISTIGNVKSISKSNNFSSLSNSSLQSSNSIQCGGCGGGNSLIGTVGGLVGGVLVGTGIIVGTVIGTVNGVVGGLLSGPSCGCH.

It belongs to the hssA/B family.

This Dictyostelium discoideum (Social amoeba) protein is HssA/B-like protein 14 (hssl14).